Consider the following 778-residue polypeptide: Protein PHOTOPERIODIC CONTROL OF HYPOCOTYL 1 (778 aa).

3 disordered regions span residues 74-95 (QKRE…VGSS), 186-283 (HNRG…NSAT), and 316-335 (KTSP…KEAS). Basic and acidic residues predominate over residues 198–212 (SSKDTQEDGPRKNES). Low complexity predominate over residues 230 to 247 (SGSISSSSTKGKGIKGYS). Residues 265–275 (PDRENSVDGHQ) are compositionally biased toward basic and acidic residues. Polar residues predominate over residues 317–326 (TSPSDSSETK). In terms of domain architecture, F-box spans 470-505 (WPLLPNDLLELIMGHLETSFEIFLFRSVCSSWRSVV).

In terms of assembly, interacts with light-activated phyB. Binds directly to PIF1 and COP1. In terms of processing, ubiquitinated by COP1 in darkness; this leads to proteasomal degradation. Mainly expressed in cotyledons, hypocotyls, leaves and roots.

Its subcellular location is the nucleus. Its function is as follows. Together with PCHL, regulates growth and development adaptation to the ambient environment by controlling negatively phytochrome B (phyB) dark reversion, a temperature-dependent thermal relaxation process during which phyB reverts from the active to the inactive state. Contributes to red (R) light-triggered photomorphogenesis. Promotes various light responses such as seed germination, hypocotyl gravitropism and chlorophyll biosynthesis, via direct interaction with PIF1 and COP1. Prevents DNA-binding ability of PIF1 to negatively regulate the expressions of its target genes. Facilitates the physical interaction between phyB and PIF1 and the subsequent light-induced degradation of PIF1. This is Protein PHOTOPERIODIC CONTROL OF HYPOCOTYL 1 from Arabidopsis thaliana (Mouse-ear cress).